Here is a 185-residue protein sequence, read N- to C-terminus: Crossover junction endodeoxyribonuclease RuvC (185 aa).

Residues Asp-7, Glu-66, and Asp-137 contribute to the active site. Mg(2+) is bound by residues Asp-7, Glu-66, and Asp-137.

It belongs to the RuvC family. As to quaternary structure, homodimer which binds Holliday junction (HJ) DNA. The HJ becomes 2-fold symmetrical on binding to RuvC with unstacked arms; it has a different conformation from HJ DNA in complex with RuvA. In the full resolvosome a probable DNA-RuvA(4)-RuvB(12)-RuvC(2) complex forms which resolves the HJ. Mg(2+) is required as a cofactor.

Its subcellular location is the cytoplasm. It carries out the reaction Endonucleolytic cleavage at a junction such as a reciprocal single-stranded crossover between two homologous DNA duplexes (Holliday junction).. Functionally, the RuvA-RuvB-RuvC complex processes Holliday junction (HJ) DNA during genetic recombination and DNA repair. Endonuclease that resolves HJ intermediates. Cleaves cruciform DNA by making single-stranded nicks across the HJ at symmetrical positions within the homologous arms, yielding a 5'-phosphate and a 3'-hydroxyl group; requires a central core of homology in the junction. The consensus cleavage sequence is 5'-(A/T)TT(C/G)-3'. Cleavage occurs on the 3'-side of the TT dinucleotide at the point of strand exchange. HJ branch migration catalyzed by RuvA-RuvB allows RuvC to scan DNA until it finds its consensus sequence, where it cleaves and resolves the cruciform DNA. The polypeptide is Crossover junction endodeoxyribonuclease RuvC (Anaeromyxobacter dehalogenans (strain 2CP-C)).